The sequence spans 516 residues: Probable cytosol aminopeptidase (516 aa).

The Mn(2+) site is built by Lys288 and Asp293. Lys300 is an active-site residue. Mn(2+) is bound by residues Asp311, Asp370, and Glu372. The active site involves Arg374.

It belongs to the peptidase M17 family. Mn(2+) serves as cofactor.

It localises to the cytoplasm. The enzyme catalyses Release of an N-terminal amino acid, Xaa-|-Yaa-, in which Xaa is preferably Leu, but may be other amino acids including Pro although not Arg or Lys, and Yaa may be Pro. Amino acid amides and methyl esters are also readily hydrolyzed, but rates on arylamides are exceedingly low.. The catalysed reaction is Release of an N-terminal amino acid, preferentially leucine, but not glutamic or aspartic acids.. In terms of biological role, presumably involved in the processing and regular turnover of intracellular proteins. Catalyzes the removal of unsubstituted N-terminal amino acids from various peptides. The protein is Probable cytosol aminopeptidase of Cupriavidus taiwanensis (strain DSM 17343 / BCRC 17206 / CCUG 44338 / CIP 107171 / LMG 19424 / R1) (Ralstonia taiwanensis (strain LMG 19424)).